A 505-amino-acid chain; its full sequence is Glycerol kinase (505 aa).

Thr13 is a binding site for ADP. ATP-binding residues include Thr13, Thr14, and Ser15. Residue Thr13 coordinates sn-glycerol 3-phosphate. Arg17 is an ADP binding site. 4 residues coordinate sn-glycerol 3-phosphate: Arg83, Glu84, Tyr135, and Asp247. Glycerol-binding residues include Arg83, Glu84, Tyr135, Asp247, and Gln248. Positions 269 and 313 each coordinate ADP. ATP is bound by residues Thr269, Gly313, Gln317, and Gly414. Positions 414 and 418 each coordinate ADP.

It belongs to the FGGY kinase family.

It catalyses the reaction glycerol + ATP = sn-glycerol 3-phosphate + ADP + H(+). It functions in the pathway polyol metabolism; glycerol degradation via glycerol kinase pathway; sn-glycerol 3-phosphate from glycerol: step 1/1. With respect to regulation, inhibited by fructose 1,6-bisphosphate (FBP). In terms of biological role, key enzyme in the regulation of glycerol uptake and metabolism. Catalyzes the phosphorylation of glycerol to yield sn-glycerol 3-phosphate. This chain is Glycerol kinase, found in Clavibacter michiganensis subsp. michiganensis (strain NCPPB 382).